Reading from the N-terminus, the 279-residue chain is Small ribosomal subunit protein uS2 (279 aa).

Belongs to the universal ribosomal protein uS2 family. As to quaternary structure, component of the small ribosomal subunit. Mature ribosomes consist of a small (40S) and a large (60S) subunit. The 40S subunit contains about 33 different proteins and 1 molecule of RNA (18S). The 60S subunit contains about 49 different proteins and 3 molecules of RNA (25S, 5.8S and 5S). Interacts with ribosomal protein S21.

The protein localises to the cytoplasm. Required for the assembly and/or stability of the 40S ribosomal subunit. Required for the processing of the 20S rRNA-precursor to mature 18S rRNA in a late step of the maturation of 40S ribosomal subunits. The chain is Small ribosomal subunit protein uS2 from Chlamydomonas reinhardtii (Chlamydomonas smithii).